Reading from the N-terminus, the 3907-residue chain is Cyclo-acetoacetyl-L-tryptophan synthase (3907 aa).

One can recognise a Ketosynthase family 3 (KS3) domain in the interval 2 to 436; the sequence is KTPIAVVGTA…GTNAHAIIES (435 aa). Catalysis depends on for beta-ketoacyl synthase activity residues cysteine 176, histidine 313, and histidine 356. A malonyl-CoA:ACP transacylase (MAT) domain region spans residues 555–870; it reads IFTGQGAQWA…SLLRRGQNDL (316 aa). An N-terminal hotdog fold region spans residues 937 to 1074; sequence HPLLGRRSAD…ARLTLHLGDA (138 aa). The interval 937-1236 is dehydratase (DH) domain; sequence HPLLGRRSAD…GLVMKSVPQP (300 aa). The PKS/mFAS DH domain maps to 937-1239; sequence HPLLGRRSAD…MKSVPQPDTS (303 aa). Positions 1092–1239 are C-terminal hotdog fold; it reads LAPVDVADLY…MKSVPQPDTS (148 aa). The interval 1386–1573 is methyltransferase (MT) domain; it reads AAMFSQLSKD…FSGIDHIFHD (188 aa). The segment at 2064–2238 is ketoreductase (KR)domain; the sequence is GTYFMIDMAT…VGSVMALGMV (175 aa). The segment at 2324-2352 is disordered; it reads TKEGQYAEQEDSPSLLVPDEQLQESGPGR. The Carrier 1 domain maps to 2356–2430; it reads DDLLARLSGK…LCEKAVPKPN (75 aa). Serine 2390 bears the O-(pantetheine 4'-phosphoryl)serine mark. The segment at 2504 to 2926 is condensation; sequence MSPHQSQIWF…SSNPLISVQS (423 aa). Residues 2959-3359 form an adenylation region; the sequence is FQDMVDQYGD…GSLILLGRMD (401 aa). The region spanning 3474-3549 is the Carrier 2 domain; that stretch reads KRLTLGEGEL…QMALKVDARK (76 aa). Serine 3509 bears the O-(pantetheine 4'-phosphoryl)serine mark. A reductase (RED) domain region spans residues 3594–3813; that stretch reads LTGSTSFLGR…DFQKVEIIAE (220 aa).

This sequence in the C-terminal section; belongs to the NRP synthetase family.

The enzyme catalyses L-tryptophan + malonyl-CoA + acetyl-CoA = cyclo-acetoacetyl-L-tryptophan + CO2 + 2 CoA + H2O. Its pathway is secondary metabolite biosynthesis. In terms of biological role, hybrid PKS-NRPS synthetase; part of the gene cluster that mediates the biosynthesis of the fungal neurotoxin cyclopiazonic acid (CPA), a nanomolar inhibitor of Ca(2+)-ATPase with a unique pentacyclic indole tetramic acid scaffold. The hybrid two module polyketide synthase-nonribosomal peptide synthetase (PKS-NRPS) cpaS incorporates acetyl-CoA, malonyl-CoA, and tryptophan (Trp) and utilizes a C-terminal redox-incompetent reductase domain to make and release the tryptophan tetramic acid, cyclo-acetoacetyl-L-tryptophan (c-AATrp), as the first intermediate in the pathway. CpaS catalyzes a Dieckmann-type cyclization on the N-acetoacetyl-Trp intermediate bound in thioester linkage to the phosphopantetheinyl arm of the T domain to form and release c-AATrp. CpaD then regiospecifically dimethylallylates c-AATrp to form beta-cyclopiazonic acid. CpaD discriminates against free Trp but accepts tryptophan-containing thiohydantoins, diketopiperazines, and linear peptides as substrates for C4-prenylation and also acts as regiospecific O-dimethylallyltransferase (DMAT) on a tyrosine-derived tetramic acid. The beta-cyclopiazonate dehydrogenase cpaO then carries out the dehydrogenation of beta-CPA to yield an unstable enimine product, which is captured by intramolecular cyclization to create the pentacyclic fused scaffold of alpha-cyclopiazonate. Finally, the cytochrome P450 monooxygenase cpaH mediates the conversion of CPA into the less toxic 2-oxocyclopiazonic acid, the end product of the CPA pathway in A.oryza. The chain is Cyclo-acetoacetyl-L-tryptophan synthase from Aspergillus oryzae (Yellow koji mold).